The sequence spans 365 residues: Class I histocompatibility antigen, Gogo-C*0101/C*0102 alpha chain (365 aa).

A signal peptide spans 1 to 24; sequence MRVMAPRTLILLLSGALALTETWA. The segment at 25-114 is alpha-1; the sequence is GSHSMRYFFT…LRGYYNQSED (90 aa). Residues 25–308 are Extracellular-facing; that stretch reads GSHSMRYFFT…EPSSQPTIPI (284 aa). An N-linked (GlcNAc...) asparagine glycan is attached at asparagine 110. The alpha-2 stretch occupies residues 115 to 206; sequence GSHTFQRMYG…ENGKETLQRA (92 aa). Cystine bridges form between cysteine 125–cysteine 188 and cysteine 227–cysteine 283. The tract at residues 207 to 298 is alpha-3; it reads DPPKTHVTHH…GLLEPLTLRW (92 aa). An Ig-like C1-type domain is found at 209 to 297; it reads PKTHVTHHPI…KGLLEPLTLR (89 aa). A connecting peptide region spans residues 299–308; the sequence is EPSSQPTIPI. A helical transmembrane segment spans residues 309–332; sequence VGIVAGLAVLAVVFTGTVVAAVMC. Over 333-365 the chain is Cytoplasmic; the sequence is RRKSSGGKGGSCSQAACSNSAQGSDESLIACKA. Phosphoserine occurs at positions 356 and 359.

The protein belongs to the MHC class I family. In terms of assembly, heterodimer of an alpha chain and a beta chain (beta-2-microglobulin).

It is found in the membrane. Its function is as follows. Involved in the presentation of foreign antigens to the immune system. The sequence is that of Class I histocompatibility antigen, Gogo-C*0101/C*0102 alpha chain from Gorilla gorilla gorilla (Western lowland gorilla).